A 579-amino-acid chain; its full sequence is Probable methyl-accepting chemotaxis protein BT9727_0355 (579 aa).

The Cytoplasmic portion of the chain corresponds to 1 to 13; that stretch reads MKKYWHKLSFLQK. Residues 14–34 form a helical membrane-spanning segment; sequence NVLLTVLVILTLVGTMGALSF. Residues 35 to 198 are Extracellular-facing; sequence NMFQNSMMSI…ASIVPSTKEK (164 aa). Residues 199–219 form a helical membrane-spanning segment; it reads FIIQGLMFICISVLIATVIQF. Over 220–579 the chain is Cytoplasmic; it reads LIVRNALAPL…LQELIGEFKS (360 aa). One can recognise an HAMP domain in the interval 223–274; it reads RNALAPLRDLREGLRRVGEGDLNIKLEERSDDIGIINSYFNNTIEKFKGIID. E289 is modified (glutamate methyl ester (Glu)). The region spanning 293–529 is the Methyl-accepting transducer domain; that stretch reads STKENSMAVQ…NIVRVVNELS (237 aa). E548 is modified (glutamate methyl ester (Glu)).

This sequence belongs to the methyl-accepting chemotaxis (MCP) protein family.

The protein localises to the cell membrane. Functionally, chemotactic-signal transducers respond to changes in the concentration of attractants and repellents in the environment, transduce a signal from the outside to the inside of the cell, and facilitate sensory adaptation through the variation of the level of methylation. This chain is Probable methyl-accepting chemotaxis protein BT9727_0355, found in Bacillus thuringiensis subsp. konkukian (strain 97-27).